Reading from the N-terminus, the 833-residue chain is MLLSTYLNWASVLLTIAGAESNIDPWDEVSSFLQGKLRKLDVTNPNAYDMNDNEQDATFYVSMDYHEEEERSEYESVWQYYNENSDQDWHKSVYDKLQVSADQFNNTEAMYKLSQINLWGQYGYPHNKSVAFQYLQKFNDMTSYENSSALFDLAVAYSTGLFGTLPVDVARGLLYFQRSARLGDLKAKQVLAYRYFSGYSVARDVDKALLLYKEIAEEIKKKYSEEQWNMVFPYIESYIVRIPDFDEGLLGKGLSTVPQSVRRKKTTRPPFAGSSNLKPIGDVGYGEVVMQFKFNAGNGNPGSFVISDSEHEDRLVELFYTAWDLYKGTYTRGRDCDKAKRLLLQVYKTYDAEVKYMDNLQKFFYVKSLDLLAHMYFTGEGFERPNVQAALDLFDRSEKILEGAEISRTASEVDKGLISQYYFNNTLGALKHYKKAKESGNAHGILFYQLGKLSEKNPELKIGDPYLYMQEASSQQYLPAQYEFAKMVESNELRKYSVEDITRLYKAFVEENENIMAPHLRLGFSELLGGSSEVSLYAYAQAAEQGYEAAQISAAYLLYQLPYKFDDPPETTIERKTMAISYYTRAFKQGNTDAAVVAGDIYFQMKNYTKALSLYQSAALKFSAQALWNIGYMYEHGLGVEKDFHLAKRFYDQILEHNQKLYFAVKASVMKLQLKSWFMWLNGKELDNISIDQEQESTVVRPFFDRLVQLLKNLSRETRGDNKKKNQHRILKEKKTPSQGIMERFGLQTEDLLTMVCVLIIFAISMFFRTVAPRGQWNVRINGVNIAGGNALGEEGNPENENEEDDENDDEGRARARNNFGFGNNFDVQVFAI.

An N-terminal signal peptide occupies residues 1–19 (MLLSTYLNWASVLLTIAGA). N105, N127, and N146 each carry an N-linked (GlcNAc...) asparagine glycan. The Sel1-like 1 repeat unit spans residues 107–143 (TEAMYKLSQINLWGQYGYPHNKSVAFQYLQKFNDMTS). Sel1-like repeat units follow at residues 147-184 (SSALFDLAVAYSTGLFGTLPVDVARGLLYFQRSARLGD) and 185-220 (LKAKQVLAYRYFSGYSVARDVDKALLLYKEIAEEIK). 2 N-linked (GlcNAc...) asparagine glycosylation sites follow: N424 and N607. Sel1-like repeat units lie at residues 592-623 (TDAAVVAGDIYFQMKNYTKALSLYQSAALKFS) and 624-659 (AQALWNIGYMYEHGLGVEKDFHLAKRFYDQILEHNQ). N688 and N713 each carry an N-linked (GlcNAc...) asparagine glycan. The chain crosses the membrane as a helical span at residues 752–772 (LLTMVCVLIIFAISMFFRTVA). A disordered region spans residues 789–818 (GNALGEEGNPENENEEDDENDDEGRARARN). Over residues 796–810 (GNPENENEEDDENDD) the composition is skewed to acidic residues.

This sequence belongs to the sel-1 family. In terms of assembly, interacts with HRD1.

It is found in the endoplasmic reticulum membrane. Component of the endoplasmic reticulum quality control (ERQC) system involved in ubiquitin-dependent degradation of missfolded endoplasmic reticulum proteins. Component of the HRD1 ubiquitin ligase complex, which is part of the ERAD-L and ERAD-M pathways responsible for the rapid degradation of soluble lumenal and membrane proteins with misfolded lumenal domains (ERAD-L), or ER-membrane proteins with misfolded transmembrane domains (ERAD-M). ERAD-L substrates are ubiquitinated through HRD1 in conjunction with the E2 ubiquitin-conjugating enzymes UBC1 and UBC7-CUE1. Ubiquitinated substrates are then removed to the cytosol via the action of the UFD1-NPL4-CDC48/p97 (UNC) AAA ATPase complex and targeted to the proteasome. ERAD-M substrates are processed by the same HRD1-HRD3 core complex, but only a subset of the other components is required for ERAD-M. Stabilizes the HRD1 ubiquitin-protein ligase. Also has a function in recruiting misfolded protein substrates. This is ERAD-associated E3 ubiquitin-protein ligase component HRD3 (HRD3) from Candida glabrata (strain ATCC 2001 / BCRC 20586 / JCM 3761 / NBRC 0622 / NRRL Y-65 / CBS 138) (Yeast).